Reading from the N-terminus, the 463-residue chain is Asparagine--tRNA ligase (463 aa).

This sequence belongs to the class-II aminoacyl-tRNA synthetase family. Homodimer.

Its subcellular location is the cytoplasm. The enzyme catalyses tRNA(Asn) + L-asparagine + ATP = L-asparaginyl-tRNA(Asn) + AMP + diphosphate + H(+). The protein is Asparagine--tRNA ligase of Clostridium novyi (strain NT).